Reading from the N-terminus, the 262-residue chain is tRNA pseudouridine synthase A (262 aa).

Asp54 functions as the Nucleophile in the catalytic mechanism. Tyr113 provides a ligand contact to substrate.

Belongs to the tRNA pseudouridine synthase TruA family. As to quaternary structure, homodimer.

It carries out the reaction uridine(38/39/40) in tRNA = pseudouridine(38/39/40) in tRNA. Its function is as follows. Formation of pseudouridine at positions 38, 39 and 40 in the anticodon stem and loop of transfer RNAs. This Lactobacillus delbrueckii subsp. bulgaricus (strain ATCC BAA-365 / Lb-18) protein is tRNA pseudouridine synthase A.